Consider the following 345-residue polypeptide: Probable translocation protein y4yO (345 aa).

A compositionally biased stretch (basic and acidic residues) spans 1–22 (MSDTSEEKSHGATPKKLSDARK). A disordered region spans residues 1 to 25 (MSDTSEEKSHGATPKKLSDARKRGQ). A run of 3 helical transmembrane segments spans residues 87–107 (LATV…AALL), 151–171 (VLVL…TMVY), and 189–209 (QLIG…LLLQ).

It belongs to the type III secretion exporter family.

The protein resides in the cell membrane. Could be involved in the secretion of an unknown factor. This Sinorhizobium fredii (strain NBRC 101917 / NGR234) protein is Probable translocation protein y4yO.